The chain runs to 334 residues: Holliday junction branch migration complex subunit RuvB (334 aa).

Positions 1–182 (MDDRMVDQSM…FGVHLRLEYY (182 aa)) are large ATPase domain (RuvB-L). ATP-binding positions include L21, R22, G63, K66, T67, T68, 129-131 (EDF), R172, Y182, and R219. Mg(2+) is bound at residue T67. The tract at residues 183–253 (QELELKEIIV…TTRASLQLLQ (71 aa)) is small ATPAse domain (RuvB-S). The tract at residues 256–334 (DEGLDYIDHK…HFSKKNGKKE (79 aa)) is head domain (RuvB-H). DNA is bound by residues R292, R311, and R316.

It belongs to the RuvB family. Homohexamer. Forms an RuvA(8)-RuvB(12)-Holliday junction (HJ) complex. HJ DNA is sandwiched between 2 RuvA tetramers; dsDNA enters through RuvA and exits via RuvB. An RuvB hexamer assembles on each DNA strand where it exits the tetramer. Each RuvB hexamer is contacted by two RuvA subunits (via domain III) on 2 adjacent RuvB subunits; this complex drives branch migration. In the full resolvosome a probable DNA-RuvA(4)-RuvB(12)-RuvC(2) complex forms which resolves the HJ.

The protein resides in the cytoplasm. It catalyses the reaction ATP + H2O = ADP + phosphate + H(+). In terms of biological role, the RuvA-RuvB-RuvC complex processes Holliday junction (HJ) DNA during genetic recombination and DNA repair, while the RuvA-RuvB complex plays an important role in the rescue of blocked DNA replication forks via replication fork reversal (RFR). RuvA specifically binds to HJ cruciform DNA, conferring on it an open structure. The RuvB hexamer acts as an ATP-dependent pump, pulling dsDNA into and through the RuvAB complex. RuvB forms 2 homohexamers on either side of HJ DNA bound by 1 or 2 RuvA tetramers; 4 subunits per hexamer contact DNA at a time. Coordinated motions by a converter formed by DNA-disengaged RuvB subunits stimulates ATP hydrolysis and nucleotide exchange. Immobilization of the converter enables RuvB to convert the ATP-contained energy into a lever motion, pulling 2 nucleotides of DNA out of the RuvA tetramer per ATP hydrolyzed, thus driving DNA branch migration. The RuvB motors rotate together with the DNA substrate, which together with the progressing nucleotide cycle form the mechanistic basis for DNA recombination by continuous HJ branch migration. Branch migration allows RuvC to scan DNA until it finds its consensus sequence, where it cleaves and resolves cruciform DNA. In Staphylococcus saprophyticus subsp. saprophyticus (strain ATCC 15305 / DSM 20229 / NCIMB 8711 / NCTC 7292 / S-41), this protein is Holliday junction branch migration complex subunit RuvB.